The sequence spans 469 residues: Serine hydroxymethyltransferase, cytosolic (469 aa).

At K248 the chain carries N6-(pyridoxal phosphate)lysine.

This sequence belongs to the SHMT family. As to quaternary structure, homotetramer. Pyridoxal 5'-phosphate is required as a cofactor.

The protein localises to the cytoplasm. The catalysed reaction is (6R)-5,10-methylene-5,6,7,8-tetrahydrofolate + glycine + H2O = (6S)-5,6,7,8-tetrahydrofolate + L-serine. Its pathway is one-carbon metabolism; tetrahydrofolate interconversion. In terms of biological role, interconversion of serine and glycine. This Eremothecium gossypii (strain ATCC 10895 / CBS 109.51 / FGSC 9923 / NRRL Y-1056) (Yeast) protein is Serine hydroxymethyltransferase, cytosolic (SHM2).